We begin with the raw amino-acid sequence, 3313 residues long: PHD finger protein rhinoceros (3313 aa).

A compositionally biased stretch (basic residues) spans 1-16 (MSQRGKRGNQHHHQSH). The segment at 1 to 136 (MSQRGKRGNQ…QGASTSSSWQ (136 aa)) is disordered. Low complexity-rich tracts occupy residues 42-71 (PPNGATTAAAAIAAAAAAAAAAAAGTATGG) and 100-134 (LGAASSSSSITKSKSTKLAKSSSKSKSQGASTSSS). Residues 323-373 (NVICDVCRSPDSEEANEMVFCDNCNICVHQACYGITAIPSGQWLCRTCSMG) form a PHD-type 1 zinc finger. The C2HC pre-PHD-type zinc finger occupies 375 to 409 (TPDCVLCPNKAGAMKSNKSGKHWAHVSCALWIPEV). The PHD-type 2; degenerate zinc-finger motif lies at 433–487 (LVCVLCRKRVGSCIQCSKHSMSKGKKENAGGASGGGSASVTSSMHKANKYATGTG). Disordered regions lie at residues 453–526 (MSKG…ARAQ), 708–1076 (LQSG…TKAA), 1107–1842 (KEAK…PPSH), 1961–2033 (AQKE…TMGN), 2104–2136 (PVTAQSGAGSNSNKLSDYDENTRMQSPFGRMQR), 2145–2164 (ARRSSSPSSVSESNDQPPAT), 2219–2252 (AAPQQQTTPTHQQQQQQQQQQQQQRTPNSQFNGG), 2353–2374 (PAYPAHPAHPAHPAHPAHPAHP), 2398–2514 (VAAK…PPPM), 2563–2587 (TTRGQPKPTPAPTAATTTNPLLHPV), 2647–2679 (ATGTGTSPSKHPAVSAAPVAPAPAPAANSQPPA), 2827–2871 (SCGL…SSSR), 2888–2954 (LAGA…IKIR), 2978–2998 (YEMTRRACPPKKRLTSNYSTP), 3017–3077 (DFDK…SATT), 3144–3233 (KAEK…SLPE), and 3259–3313 (YENS…CEVR). Residues 512–526 (KNDMTSEERNQARAQ) are compositionally biased toward basic and acidic residues. Residues 735–749 (KKLNNGAITSRTSSP) show a composition bias toward polar residues. The span at 760–772 (STSTSTATATTAA) shows a compositional bias: low complexity. Over residues 792–802 (GAATGTSTHNK) the composition is skewed to polar residues. 2 stretches are compositionally biased toward low complexity: residues 803–861 (TQSQ…ASGI) and 894–912 (EAAAGASAASPNSRSATSS). Positions 919 to 934 (QQRRRQEPERERDGRG) are enriched in basic and acidic residues. The segment covering 942–955 (TVPNRTQPTKSKQS) has biased composition (polar residues). Over residues 956–972 (TQADAGSGAGTGAAVET) the composition is skewed to low complexity. Positions 994-1003 (ESLSSDESEE) are enriched in acidic residues. Low complexity predominate over residues 1015-1025 (AALSSGLAASG). Residues 1058–1072 (VESNVSDSQNQQTIR) are compositionally biased toward polar residues. 2 stretches are compositionally biased toward basic and acidic residues: residues 1159-1168 (AADRMREPES) and 1178-1205 (KLKDSGSKQATEADKFGGGDKVRSKEQS). The segment covering 1250–1266 (EAKSTAPAAKPTAAKTS) has biased composition (low complexity). Polar residues predominate over residues 1285 to 1301 (LKSSKPLQDTTFSTANE). 3 stretches are compositionally biased toward low complexity: residues 1308-1324 (AATTATTTGMTTLGVAT), 1377-1404 (SSSSSGDSDSSSSSSSSGSSSSSGSGSD), and 1451-1464 (PAASAAAAAAAAAT). The span at 1475–1485 (TARTRQNSTNK) shows a compositional bias: polar residues. A compositionally biased stretch (basic and acidic residues) spans 1551 to 1579 (SPEKQTARRKSRADESPKKIPNLEHEINQ). A compositionally biased stretch (acidic residues) spans 1638 to 1650 (PVVEPEVETEIEP). A compositionally biased stretch (polar residues) spans 1667–1678 (TAPTHTQLSANA). Pro residues predominate over residues 1691–1702 (PAAPLPASPTPT). The segment covering 1722-1734 (SRWRSRRRRRRRS) has biased composition (basic residues). Residues 1744 to 1773 (HTQHLLNEMEMARELEEERKNELLANASKY) adopt a coiled-coil conformation. The span at 1753-1765 (EMARELEEERKNE) shows a compositional bias: basic and acidic residues. Composition is skewed to polar residues over residues 1771 to 1781 (SKYSASTSSPA) and 1796 to 1805 (DSNSANSGGD). The segment covering 1806-1819 (QQQQQQQQPLPQQL) has biased composition (low complexity). Polar residues predominate over residues 1823 to 1832 (SPSSEVASTI). Residues 1965-1984 (QQQQQQQQQQQQQQQQQQQQ) are compositionally biased toward low complexity. Polar residues-rich tracts occupy residues 1985 to 1999 (SCLYGNSSGPNSVAS) and 2007 to 2018 (MTANSGSYANSL). The segment covering 2019–2033 (TNTPNATPTNATMGN) has biased composition (low complexity). Polar residues predominate over residues 2106 to 2118 (TAQSGAGSNSNKL). Composition is skewed to low complexity over residues 2148 to 2157 (SSSPSSVSES) and 2222 to 2242 (QQQTTPTHQQQQQQQQQQQQQ). Over residues 2439 to 2451 (PVQPQPPTPPAPA) the composition is skewed to pro residues. Positions 2479-2488 (GSGGSGAPGR) are enriched in gly residues. Low complexity predominate over residues 2658–2679 (PAVSAAPVAPAPAPAANSQPPA). Residues 2891–2900 (ASGGGAGTAS) are compositionally biased toward gly residues. Residues 2909 to 2924 (CSSGSNNDNNGKTGAA) show a composition bias toward polar residues. Over residues 2935-2946 (KTLESSEDDHQT) the composition is skewed to basic and acidic residues. Positions 3017-3026 (DFDKGEENNK) are enriched in basic and acidic residues. Residues 3046–3065 (KRPKSSKPKKDKKEKKRQKQ) show a composition bias toward basic residues. Positions 3179–3198 (TSPQGLLLNSFTPHSQNANA) are enriched in polar residues. A compositionally biased stretch (low complexity) spans 3268 to 3290 (SASGTGSASSNSCNSNSNNNNNN). Residues 3291 to 3302 (GSGGGAASGGGS) are compositionally biased toward gly residues.

Belongs to the JADE family.

It localises to the nucleus. Its function is as follows. May function as a negative regulator of the EGFR/Ras/MAPK signaling pathway during eye development. This is PHD finger protein rhinoceros (rno) from Drosophila pseudoobscura pseudoobscura (Fruit fly).